Consider the following 795-residue polypeptide: Nucleolar complex protein 3 homolog (795 aa).

Disordered regions lie at residues 1–88, 124–144, and 168–190; these read MKPM…PLDM, RDDV…EPEK, and IPSE…EVPE. 2 stretches are compositionally biased toward basic and acidic residues: residues 22–39 and 46–58; these read LKLD…ESSA and QKQL…DVRS. Over residues 74–88 the composition is skewed to acidic residues; the sequence is EEEYEVEEESLPLDM. Residues 171 to 181 show a composition bias toward acidic residues; the sequence is EEQEENEEEMD. Positions 447-492 form a coiled coil; sequence SYKDKKKNLSRMQRKWKKAEEKLERELLEAEASESKEKKLKLNTET.

It belongs to the CBF/MAK21 family.

It is found in the nucleus. Its subcellular location is the nucleolus. The chain is Nucleolar complex protein 3 homolog (noc3l) from Xenopus laevis (African clawed frog).